The following is a 213-amino-acid chain: Protein GrpE (213 aa).

The disordered stretch occupies residues 1-61 (MEQGEKQVME…AEKAPTAEEL (61 aa)). The span at 13–35 (TYDEPEREQPIEEEAAPQPEEES) shows a compositional bias: acidic residues.

This sequence belongs to the GrpE family. As to quaternary structure, homodimer.

It localises to the cytoplasm. Its function is as follows. Participates actively in the response to hyperosmotic and heat shock by preventing the aggregation of stress-denatured proteins, in association with DnaK and GrpE. It is the nucleotide exchange factor for DnaK and may function as a thermosensor. Unfolded proteins bind initially to DnaJ; upon interaction with the DnaJ-bound protein, DnaK hydrolyzes its bound ATP, resulting in the formation of a stable complex. GrpE releases ADP from DnaK; ATP binding to DnaK triggers the release of the substrate protein, thus completing the reaction cycle. Several rounds of ATP-dependent interactions between DnaJ, DnaK and GrpE are required for fully efficient folding. This is Protein GrpE from Geobacillus kaustophilus (strain HTA426).